The chain runs to 282 residues: Nucleotide-binding protein Shew_3314 (282 aa).

An ATP-binding site is contributed by 8–15; that stretch reads GRSGSGKS. 56–59 provides a ligand contact to GTP; sequence DVRN.

This sequence belongs to the RapZ-like family.

Displays ATPase and GTPase activities. In Shewanella loihica (strain ATCC BAA-1088 / PV-4), this protein is Nucleotide-binding protein Shew_3314.